Here is a 292-residue protein sequence, read N- to C-terminus: Feruloyl esterase B (292 aa).

An N-terminal signal peptide occupies residues 1-18 (MLPRTLLGLALTAATGLC). 4 N-linked (GlcNAc...) asparagine glycosylation sites follow: N88, N117, N179, and N245.

Belongs to the carbohydrate esterase 1 (CE1) family. Feruloyl esterase type B subfamily.

It is found in the secreted. The catalysed reaction is feruloyl-polysaccharide + H2O = ferulate + polysaccharide.. In terms of biological role, involved in degradation of plant cell walls. Hydrolyzes of the feruloyl-arabinose ester bond in arabinoxylans as well as the feruloyl-galactose and feruloyl-arabinose ester bonds in pectin. The protein is Feruloyl esterase B (fae-1) of Neurospora crassa (strain ATCC 24698 / 74-OR23-1A / CBS 708.71 / DSM 1257 / FGSC 987).